A 548-amino-acid chain; its full sequence is DNA ligase (548 aa).

ATP is bound at residue Glu-244. Residue Lys-246 is the N6-AMP-lysine intermediate of the active site. Positions 251, 266, 295, 334, 405, and 411 each coordinate ATP.

Belongs to the ATP-dependent DNA ligase family. Mg(2+) serves as cofactor.

It catalyses the reaction ATP + (deoxyribonucleotide)n-3'-hydroxyl + 5'-phospho-(deoxyribonucleotide)m = (deoxyribonucleotide)n+m + AMP + diphosphate.. Functionally, DNA ligase that seals nicks in double-stranded DNA during DNA replication, DNA recombination and DNA repair. This chain is DNA ligase, found in Methanoculleus marisnigri (strain ATCC 35101 / DSM 1498 / JR1).